The sequence spans 401 residues: Homocysteine-responsive endoplasmic reticulum-resident ubiquitin-like domain member 2 protein (401 aa).

The 80-residue stretch at 10–89 folds into the Ubiquitin-like domain; that stretch reads VTLIIKAPNQ…HMVHLVCASR (80 aa). The segment at 87–137 is disordered; sequence ASRSPPSSPKSSTDGESHGALASSTNSNSDHSDSTTPSPSQESLSLVAGSS. Low complexity-rich tracts occupy residues 88-98 and 109-126; these read SRSPPSSPKSS and SSTN…PSPS. The chain crosses the membrane as a helical span at residues 299–319; sequence FIMVMGAMLLVYLHQAGWFPF.

Its subcellular location is the membrane. In terms of biological role, could be involved in the unfolded protein response (UPR) pathway. The polypeptide is Homocysteine-responsive endoplasmic reticulum-resident ubiquitin-like domain member 2 protein (Herpud2) (Rattus norvegicus (Rat)).